We begin with the raw amino-acid sequence, 365 residues long: Cobalt-precorrin-5B C(1)-methyltransferase (365 aa).

The protein belongs to the CbiD family.

It catalyses the reaction Co-precorrin-5B + S-adenosyl-L-methionine = Co-precorrin-6A + S-adenosyl-L-homocysteine. Its pathway is cofactor biosynthesis; adenosylcobalamin biosynthesis; cob(II)yrinate a,c-diamide from sirohydrochlorin (anaerobic route): step 6/10. In terms of biological role, catalyzes the methylation of C-1 in cobalt-precorrin-5B to form cobalt-precorrin-6A. In Clostridium perfringens (strain ATCC 13124 / DSM 756 / JCM 1290 / NCIMB 6125 / NCTC 8237 / Type A), this protein is Cobalt-precorrin-5B C(1)-methyltransferase.